The following is a 311-amino-acid chain: Acetyl-coenzyme A carboxylase carboxyl transferase subunit alpha (311 aa).

The CoA carboxyltransferase C-terminal domain occupies 36 to 286 (NLEKEVAKVY…ASYFVSKLEK (251 aa)).

It belongs to the AccA family. Acetyl-CoA carboxylase is a heterohexamer composed of biotin carboxyl carrier protein (AccB), biotin carboxylase (AccC) and two subunits each of ACCase subunit alpha (AccA) and ACCase subunit beta (AccD).

It is found in the cytoplasm. It carries out the reaction N(6)-carboxybiotinyl-L-lysyl-[protein] + acetyl-CoA = N(6)-biotinyl-L-lysyl-[protein] + malonyl-CoA. It participates in lipid metabolism; malonyl-CoA biosynthesis; malonyl-CoA from acetyl-CoA: step 1/1. In terms of biological role, component of the acetyl coenzyme A carboxylase (ACC) complex. First, biotin carboxylase catalyzes the carboxylation of biotin on its carrier protein (BCCP) and then the CO(2) group is transferred by the carboxyltransferase to acetyl-CoA to form malonyl-CoA. In Campylobacter curvus (strain 525.92), this protein is Acetyl-coenzyme A carboxylase carboxyl transferase subunit alpha.